The sequence spans 341 residues: NADH-quinone oxidoreductase subunit H 2 (341 aa).

8 helical membrane-spanning segments follow: residues 13-33, 82-102, 115-135, 161-181, 190-210, 242-262, 277-297, and 317-337; these read IVVI…IAYI, GVFL…WAVI, VGVL…IMAG, IGFV…TAIV, VLGW…VSAL, LFVL…TILF, WVPG…MFAM, and VFLP…QFAG.

It belongs to the complex I subunit 1 family. In terms of assembly, NDH-1 is composed of 14 different subunits. Subunits NuoA, H, J, K, L, M, N constitute the membrane sector of the complex.

The protein resides in the cell inner membrane. The enzyme catalyses a quinone + NADH + 5 H(+)(in) = a quinol + NAD(+) + 4 H(+)(out). Its function is as follows. NDH-1 shuttles electrons from NADH, via FMN and iron-sulfur (Fe-S) centers, to quinones in the respiratory chain. The immediate electron acceptor for the enzyme in this species is believed to be ubiquinone. Couples the redox reaction to proton translocation (for every two electrons transferred, four hydrogen ions are translocated across the cytoplasmic membrane), and thus conserves the redox energy in a proton gradient. This subunit may bind ubiquinone. This is NADH-quinone oxidoreductase subunit H 2 from Rhodopseudomonas palustris (strain HaA2).